The sequence spans 184 residues: Ethylene-responsive transcription factor ERF024 (184 aa).

Residues 1 to 21 form a disordered region; that stretch reads MQGTSKDNGGRHPLYRGVRQR. Residues 14-72 constitute a DNA-binding region (AP2/ERF); it reads LYRGVRQRKNSNKWVSEIREPRKPNRIWLGTFSTPEMAAIAYDVAALALKGSQAELNFP.

Belongs to the AP2/ERF transcription factor family. ERF subfamily.

The protein localises to the nucleus. Its function is as follows. Probably acts as a transcriptional activator. Binds to the GCC-box pathogenesis-related promoter element. May be involved in the regulation of gene expression by stress factors and by components of stress signal transduction pathways. The sequence is that of Ethylene-responsive transcription factor ERF024 (ERF024) from Arabidopsis thaliana (Mouse-ear cress).